The following is a 466-amino-acid chain: tRNA modification GTPase MnmE (466 aa).

R25, E82, and K127 together coordinate (6S)-5-formyl-5,6,7,8-tetrahydrofolate. In terms of domain architecture, TrmE-type G spans 223–388 (GIKVVIAGQP…LRRQLLQIAG (166 aa)). Residue N233 coordinates K(+). Residues 233 to 238 (NAGKSS), 252 to 258 (TPIAGTT), 277 to 280 (DTAG), 346 to 349 (NKAD), and 369 to 371 (SAR) contribute to the GTP site. A Mg(2+)-binding site is contributed by S237. K(+)-binding residues include T252, I254, and T257. T258 contributes to the Mg(2+) binding site. Residue K466 coordinates (6S)-5-formyl-5,6,7,8-tetrahydrofolate.

Belongs to the TRAFAC class TrmE-Era-EngA-EngB-Septin-like GTPase superfamily. TrmE GTPase family. In terms of assembly, homodimer. Heterotetramer of two MnmE and two MnmG subunits. K(+) serves as cofactor.

The protein localises to the cytoplasm. Functionally, exhibits a very high intrinsic GTPase hydrolysis rate. Involved in the addition of a carboxymethylaminomethyl (cmnm) group at the wobble position (U34) of certain tRNAs, forming tRNA-cmnm(5)s(2)U34. The polypeptide is tRNA modification GTPase MnmE (Acidovorax sp. (strain JS42)).